The chain runs to 112 residues: UPF0102 protein NIS_1551 (112 aa).

It belongs to the UPF0102 family.

The polypeptide is UPF0102 protein NIS_1551 (Nitratiruptor sp. (strain SB155-2)).